The sequence spans 48 residues: M-oxotoxin-Ot1c (48 aa).

It localises to the secreted. It is found in the target cell membrane. In terms of biological role, disrupts cell membranes, particularly those rich in phosphocholine, through formation of pores. Has antimicrobial activity, hemolytic activity and insecticidal activity. The chain is M-oxotoxin-Ot1c from Oxyopes takobius (Lynx spider).